The chain runs to 334 residues: Formamidase (334 aa).

The 247-residue stretch at 14 to 260 (FLVAAIQFPV…WEIVTGEIYP (247 aa)) folds into the CN hydrolase domain. Glutamate 60 functions as the Proton acceptor in the catalytic mechanism. The Proton donor role is filled by lysine 133. The Nucleophile role is filled by cysteine 166.

Belongs to the carbon-nitrogen hydrolase superfamily. Aliphatic amidase family.

The enzyme catalyses formamide + H2O = formate + NH4(+). Functionally, is an aliphatic amidase with a restricted substrate specificity, as it only hydrolyzes formamide. The polypeptide is Formamidase (Helicobacter pylori (strain Shi470)).